The sequence spans 202 residues: MEHYISLFVRAVFVENMALAFFLGMCTFIAISKKVETAIGLGVAVIVVLGITMPVNNLIYANILKDGALAWAGLPEVDLSFLGLLTFIGVIAALVQILEMTLDKYVPSLYNALGVFLPLITVNCAIMGGSLFMVERDYNLAESTVYGIGAGVSWALAIAALAGIREKLKYSDVPAGLQGLGITFITIGLMSLGFMSFSGVQL.

The next 6 helical transmembrane spans lie at alanine 11–isoleucine 31, valine 35–valine 55, leucine 79–glutamate 99, glycine 114–valine 134, threonine 144–isoleucine 164, and leucine 180–valine 200.

This sequence belongs to the NqrDE/RnfAE family. In terms of assembly, composed of six subunits; NqrA, NqrB, NqrC, NqrD, NqrE and NqrF.

The protein localises to the cell inner membrane. The catalysed reaction is a ubiquinone + n Na(+)(in) + NADH + H(+) = a ubiquinol + n Na(+)(out) + NAD(+). Functionally, NQR complex catalyzes the reduction of ubiquinone-1 to ubiquinol by two successive reactions, coupled with the transport of Na(+) ions from the cytoplasm to the periplasm. NqrA to NqrE are probably involved in the second step, the conversion of ubisemiquinone to ubiquinol. In Ectopseudomonas mendocina (strain ymp) (Pseudomonas mendocina), this protein is Na(+)-translocating NADH-quinone reductase subunit E.